The chain runs to 381 residues: 1-deoxy-D-xylulose 5-phosphate reductoisomerase (381 aa).

NADPH contacts are provided by T11, G12, S13, I14, K36, N37, and N121. K122 lines the 1-deoxy-D-xylulose 5-phosphate pocket. E123 is a binding site for NADPH. Mn(2+) is bound at residue D147. S148, E149, S173, and H196 together coordinate 1-deoxy-D-xylulose 5-phosphate. E149 lines the Mn(2+) pocket. An NADPH-binding site is contributed by G202. S209, N214, K215, and E218 together coordinate 1-deoxy-D-xylulose 5-phosphate. Residue E218 coordinates Mn(2+).

The protein belongs to the DXR family. Mg(2+) serves as cofactor. The cofactor is Mn(2+).

It catalyses the reaction 2-C-methyl-D-erythritol 4-phosphate + NADP(+) = 1-deoxy-D-xylulose 5-phosphate + NADPH + H(+). It participates in isoprenoid biosynthesis; isopentenyl diphosphate biosynthesis via DXP pathway; isopentenyl diphosphate from 1-deoxy-D-xylulose 5-phosphate: step 1/6. Its function is as follows. Catalyzes the NADPH-dependent rearrangement and reduction of 1-deoxy-D-xylulose-5-phosphate (DXP) to 2-C-methyl-D-erythritol 4-phosphate (MEP). The polypeptide is 1-deoxy-D-xylulose 5-phosphate reductoisomerase (Acetivibrio thermocellus (strain ATCC 27405 / DSM 1237 / JCM 9322 / NBRC 103400 / NCIMB 10682 / NRRL B-4536 / VPI 7372) (Clostridium thermocellum)).